Here is a 260-residue protein sequence, read N- to C-terminus: Factor V activator RVV-V gamma (260 aa).

The signal sequence occupies residues Met1 to Ala18. A propeptide spanning residues Gln19–Leu24 is cleaved from the precursor. The region spanning Val25–Ala251 is the Peptidase S1 domain. 6 disulfides stabilise this stretch: Cys31-Cys165, Cys52-Cys68, Cys100-Cys258, Cys144-Cys212, Cys176-Cys191, and Cys202-Cys227. Catalysis depends on charge relay system residues His67 and Asp112. The active-site Charge relay system is Ser206. Asn253 carries an N-linked (GlcNAc...) asparagine glycan.

Belongs to the peptidase S1 family. Snake venom subfamily. Monomer. As to expression, expressed by the venom gland.

The protein localises to the secreted. The enzyme catalyses Fully activates human clotting factor V by a single cleavage at the 1545-Trp-Tyr-Leu-Arg-|-Ser-Asn-Asn-Gly-1552 bond. Cattle, but not rabbit, factor V is cleaved, and no other proteins of the clotting system are attacked. Esterase activity is observed on Bz-Arg-OEt and Tos-Arg-OMe, and amidase activity on Phe-pipecolyl-Arg-NHPhNO2.. In terms of biological role, venom serine protease that selectively activates factor V (F5) in a calcium-independent manner. It cleaves the Arg(1545)-Ser(1546) linkage in the human factor V molecule. Induces the coagulation of mammalian plasma. The protein is Factor V activator RVV-V gamma of Daboia siamensis (Eastern Russel's viper).